The chain runs to 482 residues: Islet cell autoantigen 1-like protein (482 aa).

Residues 44 to 247 (ASDAELDAKL…TARMMSQIHE (204 aa)) enclose the AH domain. 2 disordered regions span residues 365–393 (TQEC…PLAH) and 427–449 (SHTD…PNNG). Composition is skewed to polar residues over residues 366–385 (QECQ…QEPS) and 428–449 (HTDN…PNNG).

The polypeptide is Islet cell autoantigen 1-like protein (ICA1L) (Homo sapiens (Human)).